Consider the following 411-residue polypeptide: Anaerobic sulfatase-maturating enzyme homolog AslB (411 aa).

The Radical SAM core domain occupies 3–250 (QQVPTRAFHV…LVAIFDHWIK (248 aa)). Residues Cys-21 and Cys-25 each contribute to the [4Fe-4S] cluster site. Residue Tyr-27 participates in S-adenosyl-L-methionine binding. [4Fe-4S] cluster is bound at residue Cys-28. Positions 74, 129, and 141 each coordinate S-adenosyl-L-methionine. Residues Cys-276, Cys-282, and Cys-297 each coordinate [4Fe-4S] cluster. The Proton acceptor role is filled by Asp-298. 5 residues coordinate [4Fe-4S] cluster: Cys-339, Cys-342, Cys-348, Cys-352, and Cys-371.

This sequence belongs to the radical SAM superfamily. Anaerobic sulfatase-maturating enzyme family. The cofactor is [4Fe-4S] cluster.

In Escherichia coli (strain K12), this protein is Anaerobic sulfatase-maturating enzyme homolog AslB (aslB).